Reading from the N-terminus, the 372-residue chain is O-methyltransferase bfoE (372 aa).

Tryptophan 186 lines the S-adenosyl-L-methionine pocket. Residue histidine 285 is the Proton acceptor of the active site.

Belongs to the class I-like SAM-binding methyltransferase superfamily. Cation-independent O-methyltransferase family.

It functions in the pathway secondary metabolite biosynthesis. Its function is as follows. Cytochrome P450 monooxygenase; part of the gene cluster that mediates the biosynthesis of bifonsecin B, a dimeric gamma-naphthopyrone. The first step in the biosynthesis of bifonsecin B is the production of gamma-naphthopyrone precursor YWA1 by the non-reducing polyketide synthase albA, via condensation of one acetyl-CoA starter unit with 6 malonyl-CoA units. YWA1 is then methylated by bfoE at position C-6 to yield foncesin which is further methylated at position C-8 by bfoD to produce fonsecin B. A key enzyme in the biosynthetic pathway is the cytochrome P450 monooxygenase bfoB which catalyzes the oxidative dimerization of fonsecin B to bifonsecin B. Bfob also catalyzes the oxidative dimerization of rubrofusarin B into nigerone. The stereoselectivity of bfoB is influenced by the two natural monomeric substrates; homodimerization of fonsecin B yields a stereochemically pure biaryl, M-foncerine B, while rubrofusarin B yields a mixture of enantiomers M- and P-nigerone. The sequence is that of O-methyltransferase bfoE from Aspergillus brasiliensis (strain CBS 101740 / IMI 381727 / IBT 21946).